The sequence spans 473 residues: Glutamate--tRNA ligase 1 (473 aa).

A 'HIGH' region motif is present at residues 23–33 (PSPTGLLHVGG). The short motif at 252–256 (KLSKR) is the 'KMSKS' region element. Lys-255 is an ATP binding site.

It belongs to the class-I aminoacyl-tRNA synthetase family. Glutamate--tRNA ligase type 1 subfamily. Monomer.

The protein localises to the cytoplasm. The enzyme catalyses tRNA(Glu) + L-glutamate + ATP = L-glutamyl-tRNA(Glu) + AMP + diphosphate. In terms of biological role, catalyzes the attachment of glutamate to tRNA(Glu) in a two-step reaction: glutamate is first activated by ATP to form Glu-AMP and then transferred to the acceptor end of tRNA(Glu). The protein is Glutamate--tRNA ligase 1 of Granulibacter bethesdensis (strain ATCC BAA-1260 / CGDNIH1).